A 510-amino-acid polypeptide reads, in one-letter code: Bifunctional purine biosynthesis protein PurH (510 aa).

One can recognise an MGS-like domain in the interval 1–142 (MRALISVSDK…KNFKDVLIVT (142 aa)).

It belongs to the PurH family.

It catalyses the reaction (6R)-10-formyltetrahydrofolate + 5-amino-1-(5-phospho-beta-D-ribosyl)imidazole-4-carboxamide = 5-formamido-1-(5-phospho-D-ribosyl)imidazole-4-carboxamide + (6S)-5,6,7,8-tetrahydrofolate. It carries out the reaction IMP + H2O = 5-formamido-1-(5-phospho-D-ribosyl)imidazole-4-carboxamide. It participates in purine metabolism; IMP biosynthesis via de novo pathway; 5-formamido-1-(5-phospho-D-ribosyl)imidazole-4-carboxamide from 5-amino-1-(5-phospho-D-ribosyl)imidazole-4-carboxamide (10-formyl THF route): step 1/1. The protein operates within purine metabolism; IMP biosynthesis via de novo pathway; IMP from 5-formamido-1-(5-phospho-D-ribosyl)imidazole-4-carboxamide: step 1/1. The sequence is that of Bifunctional purine biosynthesis protein PurH from Campylobacter curvus (strain 525.92).